We begin with the raw amino-acid sequence, 600 residues long: MSQVFSNLFQMTQRLEAQGQKTLDSPFVWDDGSDHDDVTKIHVRGDSRGINCIRFDYIKSGQRKYKSFYGPSWAGFTQTFKINHKEDEQLESVEGFYKPDSRTIVGLQFKTNLRISELIGHGKKDDTKFSLAVDGKKIIGFHGCSGSYLESLGAYFTCIAPTRMEAKGAKGGTDWNDGADHEGVAKIYVRGGRDCIQYIKFDYVKDRKYIYGPAHGVRGRGFTESFEINHLDNEYMVSVEGYYDEGDSGIIQGIQFRTNIKTSELIGYNNGKKFSLAANGKKIIGFHGYADQNLNSLGAYFTTSPFIKLESRESTGDLWDDGTFEGVRKVCIHKQPVLYSVIQFEYVNRGEVENRDLGLRVFIAEEGEFVVNYPYEFIISVEGTFTNEKDPHVASLTFKTSKGRTSSTFGTPGTKKFVLQSKGCGVVGFHGVLSNDYISGLGAYFRLLPPLPDGEKVEAKGGDGGASWDDGGFDCIRKIYIGHGEMGIAFVKFLYDKDNKFVVGDDHGSKTLLGVDEFELEHPDEYLISVEGSYDVVDGSESEVILMLRFKTNMRTSQVFGLDTTSSFILEKECHKIVGFHGKIGKMLHQIGVHVLPIID.

Jacalin-type lectin domains follow at residues 12–158, 161–303, 304–447, and 454–597; these read TQRL…YFTC, PTRM…YFTT, SPFI…YFRL, and GEKV…HVLP.

This sequence belongs to the jacalin lectin family.

This chain is Jacalin-related lectin 18 (JAL18), found in Arabidopsis thaliana (Mouse-ear cress).